A 316-amino-acid polypeptide reads, in one-letter code: Transcription initiation factor IIB (316 aa).

The TFIIB-type zinc-finger motif lies at 11-42; the sequence is PRVTCPNHPDAILVEDYRAGDMICPECGLVVG. The Zn(2+) site is built by Cys15, His18, Cys34, and Cys37. 3 positions are modified to phosphoserine: Ser70, Ser76, and Ser92. 2 repeat units span residues 124–200 and 218–294. Lys152, Arg154, Lys189, and Lys196 together coordinate DNA. The segment at 189-193 is core promoter DNA-binding; sequence KEIGR. An N6-acetyllysine; by autocatalysis modification is found at Lys238. The necessary for TATA box-bound TBP complex formation stretch occupies residues 244-316; the sequence is LVPGRSPISV…DTPVDKLPQL (73 aa). Arg248 contacts DNA. Residues 249 to 252 are core promoter DNA-binding; sequence SPIS. DNA-binding residues include Lys272, Ala281, Thr284, Arg286, and Arg290. Positions 283 to 286 are core promoter DNA-binding; the sequence is VTIR.

It belongs to the TFIIB family. Found in a ternary complex with TATA box-bound TBP. Part of a TFIID-containing RNA polymerase II pre-initiation complex (PIC) that is composed of TBP and at least GTF2A1, GTF2A2, GTF2E1, GTF2E2, GTF2F1, GTF2H2, GTF2H3, GTF2H4, GTF2H5, GTF2B, TCEA1, ERCC2, ERCC3, TAF1, TAF2, TAF3, TAF4, TAF5, TAF6, TAF7, TAF8, TAF9, TAF10, TAF11, TAF12 and TAF13. Associates with TFIID-TFIIA (DA complex) to form TFIID-TFIIA-TFIIB (DAB complex), which is then recognized by RNA polymerase II (Pol II). Found in a RNA polymerase II initiation complex. Interacts (via C-terminus) with TBP; this interaction with TATA box-bound TBP guides Pol II into the PIC. Interacts (via N-terminus) with Pol II. Interacts (via C-terminus) with SSU72; this interaction is inhibited by SYMPK. Interacts with NR2F1; this interaction is direct. Interacts with PGR. Interacts with ESR1. Interacts with GTF2F1 (via C-terminus and preferentially via acetylated form); this interaction prevents binding of GTF2B to GTF2F2. Interacts with GTF2F2 (via N-terminus); this interaction is inhibited in presence of GTF2F1. Interacts with the transcription elongation factor TCEA2. Interacts with HSF1 (via transactivation domain). Interacts with GPBP1. In terms of processing, acetylated. Autoacetylated; autoacetylation at Lys-238 stimulates transcription activation.

It localises to the nucleus. Its subcellular location is the chromosome. The catalysed reaction is L-lysyl-[protein] + acetyl-CoA = N(6)-acetyl-L-lysyl-[protein] + CoA + H(+). In terms of biological role, general transcription factor that plays a role in transcription initiation by RNA polymerase II (Pol II). Involved in the pre-initiation complex (PIC) formation and Pol II recruitment at promoter DNA. Together with the TATA box-bound TBP forms the core initiation complex and provides a bridge between TBP and the Pol II-TFIIF complex. Released from the PIC early following the onset of transcription during the initiation and elongation transition and reassociates with TBP during the next transcription cycle. Associates with chromatin to core promoter-specific regions. Binds to two distinct DNA core promoter consensus sequence elements in a TBP-independent manner; these IIB-recognition elements (BREs) are localized immediately upstream (BREu), 5'-[GC][GC][GA]CGCC-3', and downstream (BREd), 5'-[GA]T[TGA][TG][GT][TG][TG]-3', of the TATA box element. Modulates transcription start site selection. Also exhibits autoacetyltransferase activity that contributes to the activated transcription. The polypeptide is Transcription initiation factor IIB (Mus musculus (Mouse)).